A 484-amino-acid chain; its full sequence is Protein nucleotidyltransferase YdiU (484 aa).

Residues Gly81, Gly83, Arg84, Lys103, Asp115, Gly116, Arg166, and Arg173 each contribute to the ATP site. The active-site Proton acceptor is the Asp244. The Mg(2+) site is built by Asn245 and Asp254. Asp254 serves as a coordination point for ATP.

This sequence belongs to the SELO family. Mg(2+) is required as a cofactor. Mn(2+) serves as cofactor.

The catalysed reaction is L-seryl-[protein] + ATP = 3-O-(5'-adenylyl)-L-seryl-[protein] + diphosphate. It catalyses the reaction L-threonyl-[protein] + ATP = 3-O-(5'-adenylyl)-L-threonyl-[protein] + diphosphate. It carries out the reaction L-tyrosyl-[protein] + ATP = O-(5'-adenylyl)-L-tyrosyl-[protein] + diphosphate. The enzyme catalyses L-histidyl-[protein] + UTP = N(tele)-(5'-uridylyl)-L-histidyl-[protein] + diphosphate. The catalysed reaction is L-seryl-[protein] + UTP = O-(5'-uridylyl)-L-seryl-[protein] + diphosphate. It catalyses the reaction L-tyrosyl-[protein] + UTP = O-(5'-uridylyl)-L-tyrosyl-[protein] + diphosphate. Nucleotidyltransferase involved in the post-translational modification of proteins. It can catalyze the addition of adenosine monophosphate (AMP) or uridine monophosphate (UMP) to a protein, resulting in modifications known as AMPylation and UMPylation. The polypeptide is Protein nucleotidyltransferase YdiU (Shewanella sp. (strain MR-4)).